Reading from the N-terminus, the 101-residue chain is Small ribosomal subunit protein uS14 (101 aa).

The protein belongs to the universal ribosomal protein uS14 family. As to quaternary structure, part of the 30S ribosomal subunit. Contacts proteins S3 and S10.

Functionally, binds 16S rRNA, required for the assembly of 30S particles and may also be responsible for determining the conformation of the 16S rRNA at the A site. This Actinobacillus pleuropneumoniae serotype 3 (strain JL03) protein is Small ribosomal subunit protein uS14.